We begin with the raw amino-acid sequence, 601 residues long: Glutamine--fructose-6-phosphate aminotransferase [isomerizing] (601 aa).

The active-site Nucleophile; for GATase activity is cysteine 2. Residues 2–214 enclose the Glutamine amidotransferase type-2 domain; the sequence is CGITGYIGTD…NGDIAHLTET (213 aa). 2 SIS domains span residues 281-420 and 453-591; these read STET…ARNA and IGRE…IDKP. Lysine 596 (for Fru-6P isomerization activity) is an active-site residue.

As to quaternary structure, homodimer.

Its subcellular location is the cytoplasm. It carries out the reaction D-fructose 6-phosphate + L-glutamine = D-glucosamine 6-phosphate + L-glutamate. In terms of biological role, catalyzes the first step in hexosamine metabolism, converting fructose-6P into glucosamine-6P using glutamine as a nitrogen source. In Halobacterium salinarum (strain ATCC 700922 / JCM 11081 / NRC-1) (Halobacterium halobium), this protein is Glutamine--fructose-6-phosphate aminotransferase [isomerizing].